Here is a 340-residue protein sequence, read N- to C-terminus: Ketol-acid reductoisomerase (NADP(+)) (340 aa).

In terms of domain architecture, KARI N-terminal Rossmann spans 3–182; it reads VEMLYEADVK…GSARVGLLVT (180 aa). NADP(+) is bound by residues 26–29, arginine 49, serine 53, and 83–86; these read YGSQ and DEIQ. Histidine 108 is an active-site residue. Position 134 (glycine 134) interacts with NADP(+). Residues 183–328 form the KARI C-terminal knotted domain; sequence TFKEETEEDL…AELRKAMPFV (146 aa). Mg(2+)-binding residues include aspartate 191, glutamate 195, glutamate 227, and glutamate 231. Serine 252 provides a ligand contact to substrate.

Belongs to the ketol-acid reductoisomerase family. Requires Mg(2+) as cofactor.

It catalyses the reaction (2R)-2,3-dihydroxy-3-methylbutanoate + NADP(+) = (2S)-2-acetolactate + NADPH + H(+). It carries out the reaction (2R,3R)-2,3-dihydroxy-3-methylpentanoate + NADP(+) = (S)-2-ethyl-2-hydroxy-3-oxobutanoate + NADPH + H(+). It participates in amino-acid biosynthesis; L-isoleucine biosynthesis; L-isoleucine from 2-oxobutanoate: step 2/4. It functions in the pathway amino-acid biosynthesis; L-valine biosynthesis; L-valine from pyruvate: step 2/4. Its function is as follows. Involved in the biosynthesis of branched-chain amino acids (BCAA). Catalyzes an alkyl-migration followed by a ketol-acid reduction of (S)-2-acetolactate (S2AL) to yield (R)-2,3-dihydroxy-isovalerate. In the isomerase reaction, S2AL is rearranged via a Mg-dependent methyl migration to produce 3-hydroxy-3-methyl-2-ketobutyrate (HMKB). In the reductase reaction, this 2-ketoacid undergoes a metal-dependent reduction by NADPH to yield (R)-2,3-dihydroxy-isovalerate. This chain is Ketol-acid reductoisomerase (NADP(+)), found in Streptococcus mutans serotype c (strain ATCC 700610 / UA159).